A 539-amino-acid polypeptide reads, in one-letter code: GMP synthase [glutamine-hydrolyzing] (539 aa).

A Glutamine amidotransferase type-1 domain is found at Thr-20–Asn-215. The Nucleophile role is filled by Cys-96. Residues His-189 and Glu-191 contribute to the active site. The 198-residue stretch at Trp-216–Arg-413 folds into the GMPS ATP-PPase domain. Residue Ser-244–Thr-250 participates in ATP binding. Positions 317, 475, 531, and 537 each coordinate XMP.

Homodimer. Mg(2+) serves as cofactor.

The protein localises to the cytoplasm. It localises to the cytosol. It catalyses the reaction XMP + L-glutamine + ATP + H2O = GMP + L-glutamate + AMP + diphosphate + 2 H(+). It participates in purine metabolism; GMP biosynthesis; GMP from XMP (L-Gln route): step 1/1. Catalyzes the conversion of xanthine monophosphate (XMP) to GMP in the presence of glutamine and ATP through an adenyl-XMP intermediate. In Schizosaccharomyces pombe (strain 972 / ATCC 24843) (Fission yeast), this protein is GMP synthase [glutamine-hydrolyzing].